We begin with the raw amino-acid sequence, 264 residues long: Putative hydro-lyase RBAM_004300 (264 aa).

The protein belongs to the D-glutamate cyclase family.

In Bacillus velezensis (strain DSM 23117 / BGSC 10A6 / LMG 26770 / FZB42) (Bacillus amyloliquefaciens subsp. plantarum), this protein is Putative hydro-lyase RBAM_004300.